We begin with the raw amino-acid sequence, 430 residues long: Glutamate-1-semialdehyde 2,1-aminomutase (430 aa).

Lys265 is modified (N6-(pyridoxal phosphate)lysine).

It belongs to the class-III pyridoxal-phosphate-dependent aminotransferase family. HemL subfamily. As to quaternary structure, homodimer. It depends on pyridoxal 5'-phosphate as a cofactor.

The protein localises to the cytoplasm. It carries out the reaction (S)-4-amino-5-oxopentanoate = 5-aminolevulinate. The protein operates within porphyrin-containing compound metabolism; protoporphyrin-IX biosynthesis; 5-aminolevulinate from L-glutamyl-tRNA(Glu): step 2/2. The polypeptide is Glutamate-1-semialdehyde 2,1-aminomutase (hemL) (Helicobacter pylori (strain J99 / ATCC 700824) (Campylobacter pylori J99)).